Consider the following 186-residue polypeptide: Ribulose bisphosphate carboxylase small subunit, chloroplastic 6 (186 aa).

The transit peptide at methionine 1 to glutamine 60 directs the protein to the chloroplast.

The protein belongs to the RuBisCO small chain family. As to quaternary structure, heterohexadecamer of 8 large and 8 small subunits.

The protein localises to the plastid. Its subcellular location is the chloroplast. Functionally, ruBisCO catalyzes two reactions: the carboxylation of D-ribulose 1,5-bisphosphate, the primary event in carbon dioxide fixation, as well as the oxidative fragmentation of the pentose substrate. Both reactions occur simultaneously and in competition at the same active site. Although the small subunit is not catalytic it is essential for maximal activity. This chain is Ribulose bisphosphate carboxylase small subunit, chloroplastic 6, found in Mesembryanthemum crystallinum (Common ice plant).